Here is a 132-residue protein sequence, read N- to C-terminus: Antileukoproteinase (132 aa).

Positions Met-1–Gly-24 are cleaved as a signal peptide. Residues Glu-28–Val-76 enclose the WAP 1 domain. Disulfide bonds link Cys-35–Cys-64, Cys-43–Cys-68, Cys-51–Cys-63, and Cys-57–Cys-72. Residue Asn-77 is glycosylated (N-linked (GlcNAc...) asparagine). One can recognise a WAP 2 domain in the interval Val-82–Val-130. 4 disulfides stabilise this stretch: Cys-89/Cys-118, Cys-96/Cys-122, Cys-105/Cys-117, and Cys-111/Cys-126.

In terms of assembly, interacts with GRN; interaction protects progranulin from proteolysis. In terms of tissue distribution, detected in bronchoalveolar fluid (at protein level). Detected in large and small intestine, trachea, skin, lung and tongue.

It localises to the secreted. Acid-stable proteinase inhibitor with strong affinities for trypsin, chymotrypsin, elastase, and cathepsin G. Modulates the inflammatory and immune responses after bacterial infection, and after infection by the intracellular parasite L.major. Down-regulates responses to bacterial lipopolysaccharide (LPS). Plays a role in regulating the activation of NF-kappa-B and inflammatory responses. Has antimicrobial activity against mycobacteria, but not against salmonella. Contributes to normal resistance against infection by M.tuberculosis. Required for normal resistance to infection by L.major. Required for normal wound healing, probably by preventing tissue damage by limiting protease activity. Together with ELANE, required for normal differentiation and proliferation of bone marrow myeloid cells. In Ovis aries (Sheep), this protein is Antileukoproteinase (SLPI).